We begin with the raw amino-acid sequence, 144 residues long: Large ribosomal subunit protein uL16 (144 aa).

Over residues 1–19 (MLLPKRVKYRRQHRPKTTG) the composition is skewed to basic residues. The segment at 1 to 23 (MLLPKRVKYRRQHRPKTTGRSKG) is disordered.

It belongs to the universal ribosomal protein uL16 family. Part of the 50S ribosomal subunit.

In terms of biological role, binds 23S rRNA and is also seen to make contacts with the A and possibly P site tRNAs. This is Large ribosomal subunit protein uL16 from Staphylococcus haemolyticus (strain JCSC1435).